A 98-amino-acid chain; its full sequence is Integration host factor subunit alpha (98 aa).

The tract at residues 54-74 (LRDKSSRPGRNPKTGESVPVS) is disordered.

The protein belongs to the bacterial histone-like protein family. Heterodimer of an alpha and a beta chain.

Functionally, this protein is one of the two subunits of integration host factor, a specific DNA-binding protein that functions in genetic recombination as well as in transcriptional and translational control. The sequence is that of Integration host factor subunit alpha (ihfA) from Pasteurella multocida (strain Pm70).